We begin with the raw amino-acid sequence, 150 residues long: Group IIC secretory phospholipase A2 (150 aa).

A signal peptide spans 1-20; sequence MKGIAIFLVFIFYWTTSTLS. Disulfide bonds link C46-C143, C48-C64, C63-C121, C69-C150, C70-C114, C79-C107, C97-C112, and C99-C105. Residues Y47, G49, and G51 each coordinate Ca(2+). H67 is a catalytic residue. Ca(2+) is bound at residue D68. N92 carries N-linked (GlcNAc...) asparagine glycosylation. The active site involves D115.

The protein belongs to the phospholipase A2 family. Requires Ca(2+) as cofactor. As to expression, testis specific.

The protein resides in the secreted. The enzyme catalyses a 1,2-diacyl-sn-glycero-3-phosphocholine + H2O = a 1-acyl-sn-glycero-3-phosphocholine + a fatty acid + H(+). Its function is as follows. PA2 catalyzes the calcium-dependent hydrolysis of the 2-acyl groups in 3-sn-phosphoglycerides. Testis PA2 may be important in the production of prostaglandins, by the release of arachidonic acid, which in turn are necessary for the contractions of the seminiferous tubules and the testicular capsule; they also seem to decrease sperm transit time through the male reproductive tract. The protein is Group IIC secretory phospholipase A2 (Pla2g2c) of Mus musculus (Mouse).